Here is a 420-residue protein sequence, read N- to C-terminus: ATP phosphoribosyltransferase regulatory subunit (420 aa).

The protein belongs to the class-II aminoacyl-tRNA synthetase family. HisZ subfamily. In terms of assembly, heteromultimer composed of HisG and HisZ subunits.

It is found in the cytoplasm. It participates in amino-acid biosynthesis; L-histidine biosynthesis; L-histidine from 5-phospho-alpha-D-ribose 1-diphosphate: step 1/9. Functionally, required for the first step of histidine biosynthesis. May allow the feedback regulation of ATP phosphoribosyltransferase activity by histidine. This is ATP phosphoribosyltransferase regulatory subunit from Bacillus anthracis (strain A0248).